The chain runs to 193 residues: Flagellar transcriptional regulator FlhC (193 aa).

Zn(2+) is bound by residues Cys138, Cys141, Cys158, and Cys161.

It belongs to the FlhC family. In terms of assembly, heterohexamer composed of two FlhC and four FlhD subunits. Each FlhC binds a FlhD dimer, forming a heterotrimer, and a hexamer assembles by dimerization of two heterotrimers. Zn(2+) is required as a cofactor.

The protein resides in the cytoplasm. Functions in complex with FlhD as a master transcriptional regulator that regulates transcription of several flagellar and non-flagellar operons by binding to their promoter region. Activates expression of class 2 flagellar genes, including fliA, which is a flagellum-specific sigma factor that turns on the class 3 genes. Also regulates genes whose products function in a variety of physiological pathways. This is Flagellar transcriptional regulator FlhC from Proteus mirabilis.